Reading from the N-terminus, the 452-residue chain is MSLMQFSGLLVVWLLSTLFIATLTWFEFRRVRFNFNVFFSLLFLLTFFFGFPLTSVLVFRFDVGVAPPEILLQALLSAACFYGVYYVTYKTRLRKRVVDVPRKPLFTMNRVETHLTWVILMGIALVSVAIFFMHNGFLLFRLHSYSQIFSSEVSGVALKRFFYFFIPAMLVVYFLRQDSKAWLFFLVSTVAFGLLTYMIVGGTRANIIIAFAIFLFIGIIRGWISLWMLAAAGVLGIVGMFWLALKRYGLNVSGDEAFYTFLYLTRDTFSPWENLALLLQNYHNIDFQGLAPIVRDFYVFIPTWLWPGRPSIVLNSANYFTWEVLNNHSGLAISPTLIGSLVVMGGALFIPLGAIVVGLIIKWFDWLYELGNREPNRYKAAILHSFCFGAIFNMIVLVREGLDSFVSRVVFFLVVFGASLLVAKLLFWLFDSAGLIHKRTTSLPQAQVEGKL.

11 helical membrane-spanning segments follow: residues 6–26 (FSGL…LTWF), 37–57 (VFFS…TSVL), 63–83 (VGVA…CFYG), 118–138 (VILM…NGFL), 155–175 (GVAL…VYFL), 181–201 (AWLF…MIVG), 207–227 (IIIA…ISLW), 228–248 (MLAA…LKRY), 341–361 (LVVM…GLII), 378–398 (YKAA…IVLV), and 410–430 (VFFL…FWLF).

This sequence belongs to the WzyE family. In terms of assembly, probably part of a complex composed of WzxE, WzyE and WzzE.

Its subcellular location is the cell inner membrane. It participates in bacterial outer membrane biogenesis; enterobacterial common antigen biosynthesis. Probably involved in the polymerization of enterobacterial common antigen (ECA) trisaccharide repeat units. The sequence is that of Probable ECA polymerase from Salmonella gallinarum (strain 287/91 / NCTC 13346).